A 209-amino-acid chain; its full sequence is U1 small nuclear ribonucleoprotein C (209 aa).

The segment at 4–36 (HYCDYCDVFLTHDSASVRKAHNSGRNHLANVRD) adopts a Matrin-type zinc-finger fold. Residues 72-87 (PQHLQAPPQGGFAPPM) are compositionally biased toward low complexity. A disordered region spans residues 72-209 (PQHLQAPPQG…RARMMGPGGR (138 aa)). Composition is skewed to pro residues over residues 93-150 (GGFP…PFPP) and 159-191 (PGAP…PTNP).

The protein belongs to the U1 small nuclear ribonucleoprotein C family. U1 snRNP is composed of the 7 core Sm proteins B/B', D1, D2, D3, E, F and G that assemble in a heptameric protein ring on the Sm site of the small nuclear RNA to form the core snRNP, and at least 3 U1 snRNP-specific proteins U1-70K, U1-A and U1-C. U1-C interacts with U1 snRNA and the 5' splice-site region of the pre-mRNA.

It localises to the nucleus. Functionally, component of the spliceosomal U1 snRNP, which is essential for recognition of the pre-mRNA 5' splice-site and the subsequent assembly of the spliceosome. U1-C is directly involved in initial 5' splice-site recognition for both constitutive and regulated alternative splicing. The interaction with the 5' splice-site seems to precede base-pairing between the pre-mRNA and the U1 snRNA. Stimulates commitment or early (E) complex formation by stabilizing the base pairing of the 5' end of the U1 snRNA and the 5' splice-site region. The polypeptide is U1 small nuclear ribonucleoprotein C (Coprinopsis cinerea (strain Okayama-7 / 130 / ATCC MYA-4618 / FGSC 9003) (Inky cap fungus)).